Consider the following 419-residue polypeptide: Gamma-glutamyl phosphate reductase (419 aa).

It belongs to the gamma-glutamyl phosphate reductase family.

It localises to the cytoplasm. The enzyme catalyses L-glutamate 5-semialdehyde + phosphate + NADP(+) = L-glutamyl 5-phosphate + NADPH + H(+). It participates in amino-acid biosynthesis; L-proline biosynthesis; L-glutamate 5-semialdehyde from L-glutamate: step 2/2. Its function is as follows. Catalyzes the NADPH-dependent reduction of L-glutamate 5-phosphate into L-glutamate 5-semialdehyde and phosphate. The product spontaneously undergoes cyclization to form 1-pyrroline-5-carboxylate. This is Gamma-glutamyl phosphate reductase from Ruthia magnifica subsp. Calyptogena magnifica.